The primary structure comprises 343 residues: Dihydroorotate dehydrogenase (quinone) (343 aa).

FMN-binding positions include 61 to 65 (AGLDK) and Thr-85. Lys-65 provides a ligand contact to substrate. A substrate-binding site is contributed by 110–114 (NRMGF). FMN-binding residues include Asn-138 and Asn-171. Residue Asn-171 coordinates substrate. The active-site Nucleophile is the Ser-174. Asn-176 contacts substrate. Lys-216 and Thr-244 together coordinate FMN. 245-246 (NT) provides a ligand contact to substrate. Residues Gly-267, Gly-296, and 317-318 (YS) contribute to the FMN site.

This sequence belongs to the dihydroorotate dehydrogenase family. Type 2 subfamily. In terms of assembly, monomer. It depends on FMN as a cofactor.

The protein resides in the cell membrane. It carries out the reaction (S)-dihydroorotate + a quinone = orotate + a quinol. It participates in pyrimidine metabolism; UMP biosynthesis via de novo pathway; orotate from (S)-dihydroorotate (quinone route): step 1/1. In terms of biological role, catalyzes the conversion of dihydroorotate to orotate with quinone as electron acceptor. The chain is Dihydroorotate dehydrogenase (quinone) from Pseudomonas savastanoi pv. phaseolicola (strain 1448A / Race 6) (Pseudomonas syringae pv. phaseolicola (strain 1448A / Race 6)).